Reading from the N-terminus, the 285-residue chain is MTAQIIDGKLISQTVRSEVGARVKARVEAGLRAPGLAVVLVGQDPASQVYVGSKRRACEEVGFVSKSYDLPTTTSESELLNLIDELNQDPEIDGILVQLPLPAGMDSTKILEHIDPEKDVDGFHPYNVGRLSQRIPKLRSCTPKGIITLLDRYNIQVRGMHAVVVGASNIVGRPMTLELLLAGCTTTTCHRFTKDLESHIRQADLVVVAVGKPNFIPGEWIKEGAVVVDVGINRLDSGKLIGDVEYDVAKTKASYITPVPGGVGPMTVATLIENTLLACEQYHSK.

Residues 166 to 168 and I232 contribute to the NADP(+) site; that span reads GAS.

The protein belongs to the tetrahydrofolate dehydrogenase/cyclohydrolase family. As to quaternary structure, homodimer.

It carries out the reaction (6R)-5,10-methylene-5,6,7,8-tetrahydrofolate + NADP(+) = (6R)-5,10-methenyltetrahydrofolate + NADPH. The enzyme catalyses (6R)-5,10-methenyltetrahydrofolate + H2O = (6R)-10-formyltetrahydrofolate + H(+). The protein operates within one-carbon metabolism; tetrahydrofolate interconversion. Its function is as follows. Catalyzes the oxidation of 5,10-methylenetetrahydrofolate to 5,10-methenyltetrahydrofolate and then the hydrolysis of 5,10-methenyltetrahydrofolate to 10-formyltetrahydrofolate. The chain is Bifunctional protein FolD from Aliivibrio fischeri (strain MJ11) (Vibrio fischeri).